The chain runs to 761 residues: uncharacterized protein (761 aa).

TPR repeat units follow at residues E35–S68, A69–D102, D103–K136, V137–F170, E172–N203, E204–D237, L351–A384, and A419–E452. A protein sulfotransferase-like region spans residues K487–G761.

The protein in the C-terminal section; belongs to the protein sulfotransferase family.

This is an uncharacterized protein from Aquifex aeolicus (strain VF5).